The sequence spans 237 residues: Flagellar L-ring protein (237 aa).

Positions 1-16 (MIKRSAVVLMAVILTG) are cleaved as a signal peptide. Cysteine 17 carries N-palmitoyl cysteine lipidation. Residue cysteine 17 is the site of S-diacylglycerol cysteine attachment. The tract at residues 122–143 (PPDSSGDMSTDSNSSSDGKGSV) is disordered. Residues 124 to 140 (DSSGDMSTDSNSSSDGK) show a composition bias toward low complexity.

The protein belongs to the FlgH family. In terms of assembly, the basal body constitutes a major portion of the flagellar organelle and consists of four rings (L,P,S, and M) mounted on a central rod.

The protein localises to the cell outer membrane. It is found in the bacterial flagellum basal body. Assembles around the rod to form the L-ring and probably protects the motor/basal body from shearing forces during rotation. This Allorhizobium ampelinum (strain ATCC BAA-846 / DSM 112012 / S4) (Agrobacterium vitis (strain S4)) protein is Flagellar L-ring protein.